The following is a 239-amino-acid chain: LexA repressor (239 aa).

The H-T-H motif DNA-binding region spans 26–46; it reads FDEMKDALDLASKSGIHRLIT. Catalysis depends on for autocatalytic cleavage activity residues Ser159 and Lys197.

The protein belongs to the peptidase S24 family. In terms of assembly, homodimer.

It catalyses the reaction Hydrolysis of Ala-|-Gly bond in repressor LexA.. Its function is as follows. Represses a number of genes involved in the response to DNA damage (SOS response), including recA and lexA. In the presence of single-stranded DNA, RecA interacts with LexA causing an autocatalytic cleavage which disrupts the DNA-binding part of LexA, leading to derepression of the SOS regulon and eventually DNA repair. This is LexA repressor from Rhizobium etli (strain CIAT 652).